The chain runs to 932 residues: MADINHDGPKADGSQMRERPSAKPLHLYNSEDAKKKVLELNQEEEDNKHEEKRKTFGRTPDGTVFIVPQTHDMVSQLLSPSQPKNLSDLAILAVLASLIFTLYICPTSARKPVFAAIFLFWRAAYNAGIGWLLEGQSKHNRLVLWAKNSHIFENPETGNNPHPTIYKLIKREMETKIPKDYKFEEAPLEYNTWLVFRRVVDLILMCDFVSYCLFAIACFNRPPESWLLFGLRWTTGIVLFIFNVFVKLDAHRVVKDFAWYCYHVLFISIVAHAAQFAFLTLVEEPHIQKIYNPPPPRRMRQNSEKFNPEDRPATAHSDATYTDTGVIYDSVRQPAPMHHIVGLQNTDFHRSIDVTVVLLCFYMFCLATVTPNTIAVRLFLFVHAFVWRLWYALGLGYILDRQSKKKNWTRHFIKHGDTKEEAWRQWKSLYHLSMTMCHASFGAAVWKMYELPSDWFLGLTLLRHVLGAGLLLLQLWTSTSIYDSLGEFGWFCGDFFFDPPSSNLTYSGIYRFLNNPERVLGLAGVWGLALITWNPPIFYLAATAHILNLAFLQFVERPHMQRLYGRKLRAESGVSKTLRQAMPSPVRNWQSAADDYVNSTVEFIEDLLEHARPKLAAGYETIVKDTTALFKTYPARISITRVPQDLAGLDPKQYKLEIEGTPSAPTVEIQKHGGREGELARTPATRTSEFKTLTFEYGAPIRVRWQAPVNHHKKDWIGLYMVTDNQSREVTRISSNGRWVATNKGVYDSTRAEDGILVSDRLVSVNSDEDEGGDCYTGEVEFRGDKLWWTTGVFEFRYHHGGKHHVMALSQAFEIRIARFDEDDVEVDANGTVHRAVEQALLPVIQNCFDRDPEIAPSTPEESFGSLVERDGKFAKRVVFAVHQMFGIEFAPEVVQADGNARNLAWRICNAKKILAPYSMSASRGRNTPTSR.

Composition is skewed to basic and acidic residues over residues 1–21 (MADINHDGPKADGSQMRERPS) and 29–38 (NSEDAKKKVL). A disordered region spans residues 1-61 (MADINHDGPK…KRKTFGRTPD (61 aa)). Residues 1-88 (MADINHDGPK…SPSQPKNLSD (88 aa)) lie on the Lumenal side of the membrane. Residues 89–109 (LAILAVLASLIFTLYICPTSA) traverse the membrane as a helical segment. Topologically, residues 110–112 (RKP) are cytoplasmic. Residues 113 to 133 (VFAAIFLFWRAAYNAGIGWLL) form a helical membrane-spanning segment. The Lumenal segment spans residues 134-198 (EGQSKHNRLV…EYNTWLVFRR (65 aa)). Residues 199-219 (VVDLILMCDFVSYCLFAIACF) form a helical membrane-spanning segment. Over 220 to 225 (NRPPES) the chain is Cytoplasmic. Residues 226–246 (WLLFGLRWTTGIVLFIFNVFV) form a helical membrane-spanning segment. Topologically, residues 247–261 (KLDAHRVVKDFAWYC) are lumenal. The helical transmembrane segment at 262–282 (YHVLFISIVAHAAQFAFLTLV) threads the bilayer. Residues 283 to 355 (EEPHIQKIYN…TDFHRSIDVT (73 aa)) are Cytoplasmic-facing. Residues 292–317 (NPPPPRRMRQNSEKFNPEDRPATAHS) are disordered. Over residues 301–313 (QNSEKFNPEDRPA) the composition is skewed to basic and acidic residues. The helical transmembrane segment at 356–376 (VVLLCFYMFCLATVTPNTIAV) threads the bilayer. R377 is a topological domain (lumenal). The chain crosses the membrane as a helical span at residues 378-398 (LFLFVHAFVWRLWYALGLGYI). Over 399 to 428 (LDRQSKKKNWTRHFIKHGDTKEEAWRQWKS) the chain is Cytoplasmic. Residues 429-449 (LYHLSMTMCHASFGAAVWKMY) form a helical membrane-spanning segment. Residues 450–454 (ELPSD) lie on the Lumenal side of the membrane. The helical transmembrane segment at 455 to 475 (WFLGLTLLRHVLGAGLLLLQL) threads the bilayer. Topologically, residues 476–518 (WTSTSIYDSLGEFGWFCGDFFFDPPSSNLTYSGIYRFLNNPER) are cytoplasmic. A helical membrane pass occupies residues 519 to 539 (VLGLAGVWGLALITWNPPIFY). Over 540-932 (LAATAHILNL…SRGRNTPTSR (393 aa)) the chain is Lumenal.

This sequence belongs to the class VI-like SAM-binding methyltransferase superfamily. CHO2 family.

It localises to the endoplasmic reticulum membrane. The enzyme catalyses a 1,2-diacyl-sn-glycero-3-phosphoethanolamine + S-adenosyl-L-methionine = a 1,2-diacyl-sn-glycero-3-phospho-N-methylethanolamine + S-adenosyl-L-homocysteine + H(+). It functions in the pathway phospholipid metabolism; phosphatidylcholine biosynthesis. Functionally, catalyzes the first step of the methylation pathway of phosphatidylcholine biosynthesis, the SAM-dependent methylation of phosphatidylethanolamine (PE) to phosphatidylmonomethylethanolamine (PMME). In Phaeosphaeria nodorum (strain SN15 / ATCC MYA-4574 / FGSC 10173) (Glume blotch fungus), this protein is Phosphatidylethanolamine N-methyltransferase (CHO2).